The chain runs to 158 residues: Crossover junction endodeoxyribonuclease RuvC (158 aa).

Active-site residues include aspartate 7, glutamate 66, and aspartate 139. Mg(2+)-binding residues include aspartate 7, glutamate 66, and aspartate 139.

The protein belongs to the RuvC family. As to quaternary structure, homodimer which binds Holliday junction (HJ) DNA. The HJ becomes 2-fold symmetrical on binding to RuvC with unstacked arms; it has a different conformation from HJ DNA in complex with RuvA. In the full resolvosome a probable DNA-RuvA(4)-RuvB(12)-RuvC(2) complex forms which resolves the HJ. It depends on Mg(2+) as a cofactor.

The protein localises to the cytoplasm. It catalyses the reaction Endonucleolytic cleavage at a junction such as a reciprocal single-stranded crossover between two homologous DNA duplexes (Holliday junction).. Functionally, the RuvA-RuvB-RuvC complex processes Holliday junction (HJ) DNA during genetic recombination and DNA repair. Endonuclease that resolves HJ intermediates. Cleaves cruciform DNA by making single-stranded nicks across the HJ at symmetrical positions within the homologous arms, yielding a 5'-phosphate and a 3'-hydroxyl group; requires a central core of homology in the junction. The consensus cleavage sequence is 5'-(A/T)TT(C/G)-3'. Cleavage occurs on the 3'-side of the TT dinucleotide at the point of strand exchange. HJ branch migration catalyzed by RuvA-RuvB allows RuvC to scan DNA until it finds its consensus sequence, where it cleaves and resolves the cruciform DNA. The polypeptide is Crossover junction endodeoxyribonuclease RuvC (Nitratiruptor sp. (strain SB155-2)).